The sequence spans 288 residues: 3'-5' exonuclease (288 aa).

The segment at Arg-30–Pro-67 is disordered. Composition is skewed to polar residues over residues Ala-38 to Val-48 and Gln-57 to Pro-67. The 3'-5' exonuclease domain occupies Phe-129 to Lys-279.

As to quaternary structure, interacts with KU70 and KU80. Interacts with RECQL2. The cofactor is Mg(2+). Mn(2+) serves as cofactor. In terms of tissue distribution, expressed ubiquitously.

Its subcellular location is the nucleus. Activated upon interaction with the KU heterodimer. Not stimulated by ATP. Exonuclease that digests recessed strands of DNA duplexes in the 3' to 5' direction but hardly single-stranded DNA or blunt-ended duplexes. Also able to digest 3'-protruding strands and 3'-recessed strand termini of duplexes containing mismatched bases. The protein is 3'-5' exonuclease (WEX) of Arabidopsis thaliana (Mouse-ear cress).